The following is a 166-amino-acid chain: 16S rRNA aminocarboxypropyltransferase (166 aa).

S-adenosyl-L-methionine contacts are provided by T17, I62, L84, Y99, and S103.

It belongs to the TDD superfamily. TSR3 family.

The protein resides in the cytoplasm. It carries out the reaction an N(1)-methylpseudouridine in rRNA + S-adenosyl-L-methionine = N(1)-methyl-N(3)-[(3S)-3-amino-3-carboxypropyl]pseudouridine in rRNA + S-methyl-5'-thioadenosine + H(+). In terms of biological role, aminocarboxypropyltransferase that catalyzes the aminocarboxypropyl transfer on pseudouridine corresponding to position 914 in M.jannaschii 16S rRNA. It constitutes the last step in biosynthesis of the hypermodified N1-methyl-N3-(3-amino-3-carboxypropyl) pseudouridine (m1acp3-Psi). In Saccharolobus islandicus (strain M.16.27) (Sulfolobus islandicus), this protein is 16S rRNA aminocarboxypropyltransferase.